The primary structure comprises 507 residues: MEKILVIDYGSQYTQLLAKRIRDLGVFSEVIQYDDNISLSNVKGIILSGGPDSVYNIDAPDISDEILNAELPILGICYGMQLIAKKLGGKVEQRGIAEYGKTKINITDQSLLFKKIPSTFNVWMSHKDMVTKVPEKFKITSLTSNNIISSFENESENIYCIQFHPEVRHTEFGIDILKNFIQGICGLKGSWTLMDFVENKIKEIKDTIGDKKAIIALSGGVDSSVAAVLTHRAIGNNLKAIFVNHGFLRMNEVEEVESTFRDYMGLNLTTVDAQERFLSKLKGVTDPEQKRKIIGEEFIRVFEQEAKKEEGCEYLIQGTIYSDVIESAKSGKKTFKIKSHHNVGGLPEDIDLKIVEPLKELFKDEVRSVGEILGLPREILYRHPFPGPGLAIRIMGEINDEKLTILKKVDNIFINTLKETGWYDKVWQAFAVLIPVKTVGITGDKRSYGYVAALRSVDSVEGMTADWSKVPFEILDLVSSRITNEVEEITRVVYDISSKPPATIEWE.

Residues 3–190 enclose the Glutamine amidotransferase type-1 domain; it reads KILVIDYGSQ…IQGICGLKGS (188 aa). The active-site Nucleophile is cysteine 77. Active-site residues include histidine 164 and glutamate 166. The GMPS ATP-PPase domain occupies 191–382; that stretch reads WTLMDFVENK…LGLPREILYR (192 aa). 218–224 serves as a coordination point for ATP; the sequence is SGGVDSS.

Homodimer.

The catalysed reaction is XMP + L-glutamine + ATP + H2O = GMP + L-glutamate + AMP + diphosphate + 2 H(+). The protein operates within purine metabolism; GMP biosynthesis; GMP from XMP (L-Gln route): step 1/1. Functionally, catalyzes the synthesis of GMP from XMP. The sequence is that of GMP synthase [glutamine-hydrolyzing] from Petrotoga mobilis (strain DSM 10674 / SJ95).